A 258-amino-acid chain; its full sequence is Adenosylcobinamide-GDP ribazoletransferase (258 aa).

The next 6 helical transmembrane spans lie at 41–61 (FFPL…WLAS), 65–85 (PAPG…TGAF), 115–135 (IGAF…QLLM), 136–156 (AMAA…HAAS), 197–217 (LPLL…LLAA), and 236–256 (CLGL…LAWT).

The protein belongs to the CobS family. It depends on Mg(2+) as a cofactor.

It is found in the cell inner membrane. It catalyses the reaction alpha-ribazole + adenosylcob(III)inamide-GDP = adenosylcob(III)alamin + GMP + H(+). It carries out the reaction alpha-ribazole 5'-phosphate + adenosylcob(III)inamide-GDP = adenosylcob(III)alamin 5'-phosphate + GMP + H(+). It functions in the pathway cofactor biosynthesis; adenosylcobalamin biosynthesis; adenosylcobalamin from cob(II)yrinate a,c-diamide: step 7/7. In terms of biological role, joins adenosylcobinamide-GDP and alpha-ribazole to generate adenosylcobalamin (Ado-cobalamin). Also synthesizes adenosylcobalamin 5'-phosphate from adenosylcobinamide-GDP and alpha-ribazole 5'-phosphate. The protein is Adenosylcobinamide-GDP ribazoletransferase of Ralstonia nicotianae (strain ATCC BAA-1114 / GMI1000) (Ralstonia solanacearum).